The following is a 155-amino-acid chain: SsrA-binding protein (155 aa).

Belongs to the SmpB family.

It is found in the cytoplasm. Functionally, required for rescue of stalled ribosomes mediated by trans-translation. Binds to transfer-messenger RNA (tmRNA), required for stable association of tmRNA with ribosomes. tmRNA and SmpB together mimic tRNA shape, replacing the anticodon stem-loop with SmpB. tmRNA is encoded by the ssrA gene; the 2 termini fold to resemble tRNA(Ala) and it encodes a 'tag peptide', a short internal open reading frame. During trans-translation Ala-aminoacylated tmRNA acts like a tRNA, entering the A-site of stalled ribosomes, displacing the stalled mRNA. The ribosome then switches to translate the ORF on the tmRNA; the nascent peptide is terminated with the 'tag peptide' encoded by the tmRNA and targeted for degradation. The ribosome is freed to recommence translation, which seems to be the essential function of trans-translation. In Moorella thermoacetica (strain ATCC 39073 / JCM 9320), this protein is SsrA-binding protein.